Reading from the N-terminus, the 122-residue chain is NADH-quinone oxidoreductase subunit A (122 aa).

Helical transmembrane passes span M10 to G30, I66 to V86, and L91 to A111.

Belongs to the complex I subunit 3 family. As to quaternary structure, NDH-1 is composed of 14 different subunits. Subunits NuoA, H, J, K, L, M, N constitute the membrane sector of the complex.

The protein localises to the cell membrane. The enzyme catalyses a quinone + NADH + 5 H(+)(in) = a quinol + NAD(+) + 4 H(+)(out). Functionally, NDH-1 shuttles electrons from NADH, via FMN and iron-sulfur (Fe-S) centers, to quinones in the respiratory chain. The immediate electron acceptor for the enzyme in this species is believed to be a menaquinone. Couples the redox reaction to proton translocation (for every two electrons transferred, four hydrogen ions are translocated across the cytoplasmic membrane), and thus conserves the redox energy in a proton gradient. This is NADH-quinone oxidoreductase subunit A from Bacillus cereus (strain ATCC 14579 / DSM 31 / CCUG 7414 / JCM 2152 / NBRC 15305 / NCIMB 9373 / NCTC 2599 / NRRL B-3711).